A 194-amino-acid polypeptide reads, in one-letter code: Imidazoleglycerol-phosphate dehydratase (194 aa).

Belongs to the imidazoleglycerol-phosphate dehydratase family.

It is found in the cytoplasm. The enzyme catalyses D-erythro-1-(imidazol-4-yl)glycerol 3-phosphate = 3-(imidazol-4-yl)-2-oxopropyl phosphate + H2O. Its pathway is amino-acid biosynthesis; L-histidine biosynthesis; L-histidine from 5-phospho-alpha-D-ribose 1-diphosphate: step 6/9. This Thermus thermophilus (strain ATCC 27634 / DSM 579 / HB8) protein is Imidazoleglycerol-phosphate dehydratase.